We begin with the raw amino-acid sequence, 623 residues long: NAD-dependent malic enzyme, mitochondrial (623 aa).

A mitochondrion-targeting transit peptide spans 1-31 (MLVLCSRSRLTSSLIRRLKDQIANVSNHRSF). Fumarate-binding residues include Arg88 and Arg122. Ser143 serves as the catalytic Proton donor. A (S)-malate-binding site is contributed by Arg196. Arg196 provides a ligand contact to NAD(+). The Proton acceptor role is filled by Lys214. Residues Glu285 and Asp286 each contribute to the a divalent metal cation site. NAD(+) is bound at residue Asn289. Asp309 is an a divalent metal cation binding site. Ala345 provides a ligand contact to NAD(+). Residues Asn464 and Asn509 each coordinate (S)-malate.

This sequence belongs to the malic enzymes family. As to quaternary structure, heterodimer of two related subunits. The cofactor is Mg(2+). It depends on Mn(2+) as a cofactor.

It is found in the mitochondrion matrix. The catalysed reaction is (S)-malate + NAD(+) = pyruvate + CO2 + NADH. The protein operates within photosynthesis; C4 acid pathway. This is NAD-dependent malic enzyme, mitochondrial from Amaranthus hypochondriacus (Prince-of-Wales feather).